Consider the following 426-residue polypeptide: Histidine--tRNA ligase 1 (426 aa).

It belongs to the class-II aminoacyl-tRNA synthetase family. In terms of assembly, homodimer.

Its subcellular location is the cytoplasm. The catalysed reaction is tRNA(His) + L-histidine + ATP = L-histidyl-tRNA(His) + AMP + diphosphate + H(+). The chain is Histidine--tRNA ligase 1 from Shouchella clausii (strain KSM-K16) (Alkalihalobacillus clausii).